Reading from the N-terminus, the 117-residue chain is Immunoglobulin heavy variable 5-51 (117 aa).

The signal sequence occupies residues 1–19; sequence MGSTAILALLLAVLQGVCA. The framework-1 stretch occupies residues 20–44; the sequence is EVQLVQSGAEVKKPGESLKISCKGS. The Ig-like domain maps to 20 to 117; sequence EVQLVQSGAE…SDTAMYYCAR (98 aa). A disulfide bond links cysteine 41 and cysteine 115. Residues 45–52 form a complementarity-determining-1 region; that stretch reads GYSFTSYW. The tract at residues 53 to 69 is framework-2; the sequence is IGWVRQMPGKGLEWMGI. A complementarity-determining-2 region spans residues 70-77; sequence IYPGDSDT. The framework-3 stretch occupies residues 78–115; sequence RYSPSFQGQVTISADKSISTAYLQWSSLKASDTAMYYC. The complementarity-determining-3 stretch occupies residues 116-117; sequence AR.

In terms of assembly, immunoglobulins are composed of two identical heavy chains and two identical light chains; disulfide-linked.

The protein resides in the secreted. The protein localises to the cell membrane. V region of the variable domain of immunoglobulin heavy chains that participates in the antigen recognition. Immunoglobulins, also known as antibodies, are membrane-bound or secreted glycoproteins produced by B lymphocytes. In the recognition phase of humoral immunity, the membrane-bound immunoglobulins serve as receptors which, upon binding of a specific antigen, trigger the clonal expansion and differentiation of B lymphocytes into immunoglobulins-secreting plasma cells. Secreted immunoglobulins mediate the effector phase of humoral immunity, which results in the elimination of bound antigens. The antigen binding site is formed by the variable domain of one heavy chain, together with that of its associated light chain. Thus, each immunoglobulin has two antigen binding sites with remarkable affinity for a particular antigen. The variable domains are assembled by a process called V-(D)-J rearrangement and can then be subjected to somatic hypermutations which, after exposure to antigen and selection, allow affinity maturation for a particular antigen. This is Immunoglobulin heavy variable 5-51 from Homo sapiens (Human).